Consider the following 758-residue polypeptide: Probable ubiquitin carboxyl-terminal hydrolase creB (758 aa).

Residues 1 to 27 form a disordered region; it reads MGSFLRSFRRDVGSSTPSVGATPAKKE. One can recognise a USP domain in the interval 57-468; the sequence is FGMENYGNTC…CAYVLFYQET (412 aa). Cys66 acts as the Nucleophile in catalysis. Disordered regions lie at residues 116–148 and 243–268; these read AEAQ…DSSE and QPIP…SKTP. The segment covering 253 to 268 has biased composition (polar residues); that stretch reads TTDSSRQSISSGSKTP. Residue His419 is the Proton acceptor of the active site. Residues 514-744 are disordered; that stretch reads IPVQDEPQRH…KGDRAGHGKW (231 aa). Over residues 554–563 the composition is skewed to pro residues; the sequence is ATPPPVPPIP. A coiled-coil region spans residues 573–631; it reads KKSDIQSKKERAKEEKERKAAEKEMEKQRRKEQEARVKENQRREEAELKAALEASKASK. Composition is skewed to basic and acidic residues over residues 573-650 and 729-740; these read KKSD…DPKR and DALKSPKGDRAG.

This sequence belongs to the peptidase C19 family. In terms of assembly, interacts with creA, creC and qutD.

The catalysed reaction is Thiol-dependent hydrolysis of ester, thioester, amide, peptide and isopeptide bonds formed by the C-terminal Gly of ubiquitin (a 76-residue protein attached to proteins as an intracellular targeting signal).. Functionally, ubiquitin thioesterase component of the regulatory network controlling carbon source utilization through ubiquitination and deubiquitination involving creA, creB, creC, creD and acrB. Deubiquitinates the creA catabolic repressor and the quinate permease qutD. Also plays a role in response to carbon starvation and the control of extracellular proteases activity. The protein is Probable ubiquitin carboxyl-terminal hydrolase creB (creB) of Aspergillus niger (strain ATCC MYA-4892 / CBS 513.88 / FGSC A1513).